A 509-amino-acid chain; its full sequence is tRNA-2-methylthio-N(6)-dimethylallyladenosine synthase (509 aa).

The span at 1-15 (MNEQQRLASRQANSS) shows a compositional bias: polar residues. The disordered stretch occupies residues 1 to 25 (MNEQQRLASRQANSSTKKEEKDYSK). Basic and acidic residues predominate over residues 16-25 (TKKEEKDYSK). Residues 66-184 (RKFYIRTYGC…LPYILKDAMF (119 aa)) enclose the MTTase N-terminal domain. Residues Cys75, Cys111, Cys145, Cys221, Cys225, and Cys228 each contribute to the [4Fe-4S] cluster site. The 231-residue stretch at 207 to 437 (RRGDIKAWVN…NTLVNEYGVN (231 aa)) folds into the Radical SAM core domain. Positions 440-503 (KRYIGQIVEV…TWSLNGELVK (64 aa)) constitute a TRAM domain.

It belongs to the methylthiotransferase family. MiaB subfamily. As to quaternary structure, monomer. It depends on [4Fe-4S] cluster as a cofactor.

It localises to the cytoplasm. It catalyses the reaction N(6)-dimethylallyladenosine(37) in tRNA + (sulfur carrier)-SH + AH2 + 2 S-adenosyl-L-methionine = 2-methylsulfanyl-N(6)-dimethylallyladenosine(37) in tRNA + (sulfur carrier)-H + 5'-deoxyadenosine + L-methionine + A + S-adenosyl-L-homocysteine + 2 H(+). Catalyzes the methylthiolation of N6-(dimethylallyl)adenosine (i(6)A), leading to the formation of 2-methylthio-N6-(dimethylallyl)adenosine (ms(2)i(6)A) at position 37 in tRNAs that read codons beginning with uridine. The protein is tRNA-2-methylthio-N(6)-dimethylallyladenosine synthase of Bacillus mycoides (strain KBAB4) (Bacillus weihenstephanensis).